Reading from the N-terminus, the 482-residue chain is Glutamyl-tRNA(Gln) amidotransferase subunit A (482 aa).

Residues K81 and S156 each act as charge relay system in the active site. S180 functions as the Acyl-ester intermediate in the catalytic mechanism.

Belongs to the amidase family. GatA subfamily. Heterotrimer of A, B and C subunits.

The enzyme catalyses L-glutamyl-tRNA(Gln) + L-glutamine + ATP + H2O = L-glutaminyl-tRNA(Gln) + L-glutamate + ADP + phosphate + H(+). Its function is as follows. Allows the formation of correctly charged Gln-tRNA(Gln) through the transamidation of misacylated Glu-tRNA(Gln) in organisms which lack glutaminyl-tRNA synthetase. The reaction takes place in the presence of glutamine and ATP through an activated gamma-phospho-Glu-tRNA(Gln). The protein is Glutamyl-tRNA(Gln) amidotransferase subunit A of Brachyspira hyodysenteriae (strain ATCC 49526 / WA1).